The sequence spans 446 residues: N-succinylarginine dihydrolase (446 aa).

Substrate is bound by residues 19–28 (AGLSFGNEAS), Asn-110, and 137–138 (HR). Glu-174 is an active-site residue. Arg-213 lines the substrate pocket. His-249 is a catalytic residue. The substrate site is built by Asp-251 and Asn-364. Cys-370 acts as the Nucleophile in catalysis.

It belongs to the succinylarginine dihydrolase family. As to quaternary structure, homodimer.

The enzyme catalyses N(2)-succinyl-L-arginine + 2 H2O + 2 H(+) = N(2)-succinyl-L-ornithine + 2 NH4(+) + CO2. It functions in the pathway amino-acid degradation; L-arginine degradation via AST pathway; L-glutamate and succinate from L-arginine: step 2/5. In terms of biological role, catalyzes the hydrolysis of N(2)-succinylarginine into N(2)-succinylornithine, ammonia and CO(2). In Serratia proteamaculans (strain 568), this protein is N-succinylarginine dihydrolase.